The sequence spans 465 residues: Probable oxidoreductase AIM17 (465 aa).

The transit peptide at 1-16 (MLRSNLCRGSRILARL) directs the protein to the mitochondrion. His246, Asp248, and His428 together coordinate Fe cation.

Belongs to the gamma-BBH/TMLD family. Fe(2+) serves as cofactor. L-ascorbate is required as a cofactor.

Its subcellular location is the mitochondrion. The protein is Probable oxidoreductase AIM17 (AIM17) of Saccharomyces cerevisiae (strain ATCC 204508 / S288c) (Baker's yeast).